Consider the following 365-residue polypeptide: MRDETAEQPAPLRSGLTTGSCATATSLAAARLLLGGVVADAVQIVLPKGKQVQMRLEFCRLTKDGAEAGTIKDAGDDPDVTHGALLYSRVQLMAEPGIRFIAGKGVGTVTRPGLVLPVGEPAINPVPRKMISDHLTLLAEETGYRGGFEVTVNVEGGEALALKTMNPRLGILGGLSILGTSGIVRPFSCAAYIASIHQGIDVAKTNGFLHIAACTGNASEDTMRRVYNLPEIALIEMGDFVGAVLKHLRKVPVDKLSLCGGFGKISKLAAGHMDLHSRHSSIDLPQLAEWAAAIGADDTLQQAIRGANTSQQALAIASAAGVALGDEVCRHALEFARSVVPAQVQVEVFAIDRQGGIVGHAGAFV.

The protein belongs to the CbiD family.

It carries out the reaction Co-precorrin-5B + S-adenosyl-L-methionine = Co-precorrin-6A + S-adenosyl-L-homocysteine. Its pathway is cofactor biosynthesis; adenosylcobalamin biosynthesis; cob(II)yrinate a,c-diamide from sirohydrochlorin (anaerobic route): step 6/10. Catalyzes the methylation of C-1 in cobalt-precorrin-5B to form cobalt-precorrin-6A. The chain is Cobalt-precorrin-5B C(1)-methyltransferase from Pseudomonas fluorescens (strain Pf0-1).